A 215-amino-acid chain; its full sequence is Ribonuclease T (215 aa).

The Exonuclease domain occupies 20-194 (VVIDVETAGF…YDTLQTAKLF (175 aa)). Mg(2+) contacts are provided by Asp23, Glu25, His181, and Asp186. The Proton donor/acceptor role is filled by His181.

The protein belongs to the RNase T family. In terms of assembly, homodimer. Mg(2+) is required as a cofactor.

Trims short 3' overhangs of a variety of RNA species, leaving a one or two nucleotide 3' overhang. Responsible for the end-turnover of tRNA: specifically removes the terminal AMP residue from uncharged tRNA (tRNA-C-C-A). Also appears to be involved in tRNA biosynthesis. The polypeptide is Ribonuclease T (Yersinia pestis).